The sequence spans 216 residues: Adenylate kinase (216 aa).

10 to 15 (GAGKGT) serves as a coordination point for ATP. The NMP stretch occupies residues 30-59 (STGDMLRAAVSAQTEVGKRAKAVMDAGKLV). AMP is bound by residues Thr31, Arg36, 57–59 (KLV), 85–88 (GFPR), and Gln92. The LID stretch occupies residues 126–163 (GRYTCANCGTGYHDENLKPKVEGVCDKCGSTHFKRRPD). Position 127 (Arg127) interacts with ATP. Positions 130, 133, 150, and 153 each coordinate Zn(2+). 2 residues coordinate AMP: Arg160 and Arg172. ATP is bound at residue Ala200.

The protein belongs to the adenylate kinase family. As to quaternary structure, monomer.

It is found in the cytoplasm. It carries out the reaction AMP + ATP = 2 ADP. Its pathway is purine metabolism; AMP biosynthesis via salvage pathway; AMP from ADP: step 1/1. Functionally, catalyzes the reversible transfer of the terminal phosphate group between ATP and AMP. Plays an important role in cellular energy homeostasis and in adenine nucleotide metabolism. The protein is Adenylate kinase of Allorhizobium ampelinum (strain ATCC BAA-846 / DSM 112012 / S4) (Agrobacterium vitis (strain S4)).